The sequence spans 728 residues: Meiotic sister-chromatid recombination protein 3 (728 aa).

7 disordered regions span residues 33-171 (QLSA…GRTQ), 236-261 (NETD…LNVE), 300-335 (PTHQ…EAEA), 363-403 (SDNA…VKSN), 422-454 (SAPH…ANTG), 495-514 (VGVS…QHYL), and 561-728 (YGYQ…KSSR). Residues 35 to 46 (SAAAASAASAAS) show a composition bias toward low complexity. The segment covering 48–58 (DRTNYSRSHSL) has biased composition (polar residues). Phosphoserine occurs at positions 57 and 64. Low complexity predominate over residues 80 to 93 (STSSAAPPTSRAAA). 3 stretches are compositionally biased toward polar residues: residues 95–106 (QYSQKTYSLRSQ), 118–132 (YTTN…TSGA), and 140–171 (KNKS…GRTQ). Phosphoserine occurs at positions 127, 151, and 155. Basic and acidic residues predominate over residues 251–261 (HLQDDSELNVE). Positions 309 to 326 (IHNKRKQASTTRRKKRPP) are enriched in basic residues. S363 bears the Phosphoserine mark. Polar residues-rich tracts occupy residues 363 to 373 (SDNASAPLGSN) and 385 to 403 (TLRS…VKSN). Positions 590-634 (EGVTTAKPSSNEGVMTNPVVTDSPSPLQQQIDSTTASSNGQSQGN) are enriched in polar residues. Residues 635–646 (VPTSAVASTTRT) show a composition bias toward low complexity. T646 is subject to Phosphothreonine. 3 stretches are compositionally biased toward polar residues: residues 654-668 (NLKS…QTPQ), 675-684 (DPTTSSTNEL), and 691-708 (MVTS…TQDP). At S660 the chain carries Phosphoserine. Over residues 711 to 728 (KHKKSSFFTKLFKKKSSR) the composition is skewed to basic residues.

It is found in the cell membrane. Its function is as follows. May be involved in the control of meiotic sister-chromatid recombination. The polypeptide is Meiotic sister-chromatid recombination protein 3 (MSC3) (Saccharomyces cerevisiae (strain ATCC 204508 / S288c) (Baker's yeast)).